Consider the following 234-residue polypeptide: Methylamine utilization ferredoxin-type protein MauM (234 aa).

4 consecutive 4Fe-4S ferredoxin-type domains span residues 61 to 91 (ALAEKDFQSACVRCGLCVEDCPFDILKLASW), 98 to 131 (GTPFFTARDEPCRMCQDIPCVRACPTGALNPLLT), 140 to 176 (VAVLVDHETCLNYKGLNCSICVRVCPIRGEAISLKPI), and 184 to 215 (QIPTVDSTKCTGCGTCEKHCVLSEAAIRVLPR). Residues cysteine 71, cysteine 74, cysteine 77, cysteine 81, cysteine 109, cysteine 112, cysteine 117, cysteine 121, cysteine 149, cysteine 157, cysteine 160, cysteine 164, cysteine 193, cysteine 196, cysteine 199, and cysteine 203 each coordinate [4Fe-4S] cluster.

It participates in one-carbon metabolism; methylamine degradation. Functionally, involved in electron transfer. This chain is Methylamine utilization ferredoxin-type protein MauM (mauM), found in Methylobacillus flagellatus (strain ATCC 51484 / DSM 6875 / VKM B-1610 / KT).